Reading from the N-terminus, the 90-residue chain is MNDSVKTSLKRTLVGKVVSNKMDKTVTVLVEHRVKHPIYGKYVVRSKKYHAHDEANTYNEGDLVEIQETRPVSKTKAWAVSRLVEAARVI.

The protein belongs to the universal ribosomal protein uS17 family. Part of the 30S ribosomal subunit.

In terms of biological role, one of the primary rRNA binding proteins, it binds specifically to the 5'-end of 16S ribosomal RNA. In Burkholderia mallei (strain NCTC 10247), this protein is Small ribosomal subunit protein uS17.